The chain runs to 160 residues: Cytochrome b6-f complex subunit 4 (160 aa).

Transmembrane regions (helical) follow at residues 36–56, 95–115, and 131–151; these read LLYI…GLAV, LLGV…PFLE, and TVFL…ALPI.

It belongs to the cytochrome b family. PetD subfamily. The 4 large subunits of the cytochrome b6-f complex are cytochrome b6, subunit IV (17 kDa polypeptide, petD), cytochrome f and the Rieske protein, while the 4 small subunits are petG, petL, petM and petN. The complex functions as a dimer.

The protein localises to the plastid. It localises to the chloroplast thylakoid membrane. Its function is as follows. Component of the cytochrome b6-f complex, which mediates electron transfer between photosystem II (PSII) and photosystem I (PSI), cyclic electron flow around PSI, and state transitions. The sequence is that of Cytochrome b6-f complex subunit 4 from Marchantia polymorpha (Common liverwort).